Here is a 470-residue protein sequence, read N- to C-terminus: 3-isopropylmalate dehydratase large subunit (470 aa).

Residues C349, C409, and C412 each contribute to the [4Fe-4S] cluster site.

It belongs to the aconitase/IPM isomerase family. LeuC type 1 subfamily. As to quaternary structure, heterodimer of LeuC and LeuD. It depends on [4Fe-4S] cluster as a cofactor.

It carries out the reaction (2R,3S)-3-isopropylmalate = (2S)-2-isopropylmalate. The protein operates within amino-acid biosynthesis; L-leucine biosynthesis; L-leucine from 3-methyl-2-oxobutanoate: step 2/4. Functionally, catalyzes the isomerization between 2-isopropylmalate and 3-isopropylmalate, via the formation of 2-isopropylmaleate. This Campylobacter jejuni subsp. jejuni serotype O:2 (strain ATCC 700819 / NCTC 11168) protein is 3-isopropylmalate dehydratase large subunit.